Consider the following 493-residue polypeptide: Galactose-1-phosphate uridylyltransferase 2 (493 aa).

The protein belongs to the galactose-1-phosphate uridylyltransferase type 2 family.

The protein resides in the cytoplasm. The enzyme catalyses alpha-D-galactose 1-phosphate + UDP-alpha-D-glucose = alpha-D-glucose 1-phosphate + UDP-alpha-D-galactose. It participates in carbohydrate metabolism; galactose metabolism. This is Galactose-1-phosphate uridylyltransferase 2 (galT2) from Streptococcus pneumoniae serotype 4 (strain ATCC BAA-334 / TIGR4).